We begin with the raw amino-acid sequence, 259 residues long: Phosphoribosylaminoimidazole-succinocarboxamide synthase (259 aa).

Belongs to the SAICAR synthetase family.

The enzyme catalyses 5-amino-1-(5-phospho-D-ribosyl)imidazole-4-carboxylate + L-aspartate + ATP = (2S)-2-[5-amino-1-(5-phospho-beta-D-ribosyl)imidazole-4-carboxamido]succinate + ADP + phosphate + 2 H(+). It participates in purine metabolism; IMP biosynthesis via de novo pathway; 5-amino-1-(5-phospho-D-ribosyl)imidazole-4-carboxamide from 5-amino-1-(5-phospho-D-ribosyl)imidazole-4-carboxylate: step 1/2. The protein is Phosphoribosylaminoimidazole-succinocarboxamide synthase of Hyphomonas neptunium (strain ATCC 15444).